The sequence spans 567 residues: Proline--tRNA ligase (567 aa).

It belongs to the class-II aminoacyl-tRNA synthetase family. ProS type 1 subfamily. Homodimer.

It localises to the cytoplasm. It carries out the reaction tRNA(Pro) + L-proline + ATP = L-prolyl-tRNA(Pro) + AMP + diphosphate. Catalyzes the attachment of proline to tRNA(Pro) in a two-step reaction: proline is first activated by ATP to form Pro-AMP and then transferred to the acceptor end of tRNA(Pro). As ProRS can inadvertently accommodate and process non-cognate amino acids such as alanine and cysteine, to avoid such errors it has two additional distinct editing activities against alanine. One activity is designated as 'pretransfer' editing and involves the tRNA(Pro)-independent hydrolysis of activated Ala-AMP. The other activity is designated 'posttransfer' editing and involves deacylation of mischarged Ala-tRNA(Pro). The misacylated Cys-tRNA(Pro) is not edited by ProRS. The sequence is that of Proline--tRNA ligase from Fusobacterium nucleatum subsp. nucleatum (strain ATCC 25586 / DSM 15643 / BCRC 10681 / CIP 101130 / JCM 8532 / KCTC 2640 / LMG 13131 / VPI 4355).